A 232-amino-acid chain; its full sequence is MASLNDICYEKIKDNFYYGLFRDFKLVVDKNTECFNATKLCNSGGKQFRQWTRLEKSKKLMEYYSRRGSQQMYEIKGDNKDQLVTQTTGTYAPIDFFEDIKRWIQLPKASSASGVVYVVTTSILQVHNVFKIGYTKNFEERLKTFNDYRHSLEPQFFAVAIYDTDNAKKLETTIHKKLKDFRSEGEFFQVELSVIKEAFLKEDCCLKDLDYEEDHSNSFTDLNDKLKTLNII.

The 105-residue stretch at 15-119 folds into the KilA-N domain; that stretch reads NFYYGLFRDF…SSASGVVYVV (105 aa).

The protein is Putative KilA-N domain-containing protein 315L of Acheta domesticus (House cricket).